Consider the following 214-residue polypeptide: Orotate phosphoribosyltransferase (214 aa).

Lys26 lines the 5-phospho-alpha-D-ribose 1-diphosphate pocket. Residue 34–35 participates in orotate binding; the sequence is FF. 5-phospho-alpha-D-ribose 1-diphosphate-binding positions include 72-73, Arg99, Lys100, Lys103, His105, and 124-132; these read YK and DDVITAGTA. Residues Thr128 and Arg157 each contribute to the orotate site.

This sequence belongs to the purine/pyrimidine phosphoribosyltransferase family. PyrE subfamily. Homodimer. Mg(2+) is required as a cofactor.

It carries out the reaction orotidine 5'-phosphate + diphosphate = orotate + 5-phospho-alpha-D-ribose 1-diphosphate. Its pathway is pyrimidine metabolism; UMP biosynthesis via de novo pathway; UMP from orotate: step 1/2. Catalyzes the transfer of a ribosyl phosphate group from 5-phosphoribose 1-diphosphate to orotate, leading to the formation of orotidine monophosphate (OMP). The polypeptide is Orotate phosphoribosyltransferase (Pseudomonas fluorescens (strain SBW25)).